Consider the following 423-residue polypeptide: Mitogen-activated protein kinase 9 (423 aa).

In terms of domain architecture, Protein kinase spans 26–321; the sequence is YQQLKPIGSG…VDEALRHPYI (296 aa). ATP-binding positions include 32 to 40 and K55; that span reads IGSGAQGIV. The active-site Proton acceptor is D151. At T183 the chain carries Phosphothreonine; by MAP2K7. The short motif at 183–185 is the TXY element; sequence TPY. Residue Y185 is modified to Phosphotyrosine; by MAP2K4. Over residues 366-375 the composition is skewed to basic and acidic residues; the sequence is RSKNGVKDQP. The disordered stretch occupies residues 366-423; the sequence is RSKNGVKDQPSDAAVSSKATPSQSSSINDISSMSTEHTLASDTDSSLDASTGPLEGCR. The segment covering 387–416 has biased composition (low complexity); that stretch reads SQSSSINDISSMSTEHTLASDTDSSLDAST.

Belongs to the protein kinase superfamily. CMGC Ser/Thr protein kinase family. MAP kinase subfamily. As to quaternary structure, interacts with MECOM. Binds to at least four scaffolding proteins, MAPK8IP1/JIP-1, MAPK8IP2/JIP-2, MAPK8IP3/JIP-3/JSAP1 and SPAG9/MAPK8IP4/JIP-4. These proteins also bind other components of the JNK signaling pathway. Interacts with NFATC4. Interacts with ATF7; the interaction does not phosphorylate ATF7 but acts as a docking site for ATF7-associated partners such as JUN. Interacts with BCL10. Interacts with CTNNB1 and GSK3B. Interacts with DCLK2. Interacts with MAPKBP1. Interacts with POU5F1; phosphorylates POU5F1 at 'Ser-347'. Found in a complex with SH3RF1, RAC2, MAP3K7/TAK1, MAP2K7/MKK7, MAPK8IP1/JIP1 and MAPK8/JNK1. Requires Mg(2+) as cofactor. In terms of processing, dually phosphorylated on Thr-183 and Tyr-185 by MAP2K7 and MAP2K4, which activates the enzyme. Autophosphorylated in vitro.

It is found in the cytoplasm. The protein resides in the nucleus. The enzyme catalyses L-seryl-[protein] + ATP = O-phospho-L-seryl-[protein] + ADP + H(+). The catalysed reaction is L-threonyl-[protein] + ATP = O-phospho-L-threonyl-[protein] + ADP + H(+). With respect to regulation, activated by threonine and tyrosine phosphorylation by either of two dual specificity kinases, MAP2K4 and MAP2K7. MAP2K4 shows a strong preference for Tyr-185 while MAP2K7 phosphorylates Tyr-183 preferentially. Inhibited by dual specificity phosphatases, such as DUSP1. In terms of biological role, serine/threonine-protein kinase involved in various processes such as cell proliferation, differentiation, migration, transformation and programmed cell death. Extracellular stimuli such as pro-inflammatory cytokines or physical stress stimulate the stress-activated protein kinase/c-Jun N-terminal kinase (SAP/JNK) signaling pathway. In this cascade, two dual specificity kinases MAP2K4/MKK4 and MAP2K7/MKK7 phosphorylate and activate MAPK9/JNK2. In turn, MAPK9/JNK2 phosphorylates a number of transcription factors, primarily components of AP-1 such as JUN and ATF2 and thus regulates AP-1 transcriptional activity. In response to oxidative or ribotoxic stresses, inhibits rRNA synthesis by phosphorylating and inactivating the RNA polymerase 1-specific transcription initiation factor RRN3. Promotes stressed cell apoptosis by phosphorylating key regulatory factors including TP53 and YAP1. In T-cells, MAPK8 and MAPK9 are required for polarized differentiation of T-helper cells into Th1 cells. Upon T-cell receptor (TCR) stimulation, is activated by CARMA1, BCL10, MAP2K7 and MAP3K7/TAK1 to regulate JUN protein levels. Plays an important role in the osmotic stress-induced epithelial tight-junctions disruption. When activated, promotes beta-catenin/CTNNB1 degradation and inhibits the canonical Wnt signaling pathway. Also participates in neurite growth in spiral ganglion neurons. Phosphorylates the CLOCK-BMAL1 heterodimer and plays a role in the regulation of the circadian clock. Phosphorylates POU5F1, which results in the inhibition of POU5F1's transcriptional activity and enhances its proteasomal degradation. Phosphorylates ALKBH5 in response to reactive oxygen species (ROS), promoting ALKBH5 sumoylation and inactivation. This chain is Mitogen-activated protein kinase 9 (Mapk9), found in Rattus norvegicus (Rat).